Reading from the N-terminus, the 208-residue chain is Large ribosomal subunit protein uL4 (208 aa).

This sequence belongs to the universal ribosomal protein uL4 family. As to quaternary structure, part of the 50S ribosomal subunit.

In terms of biological role, one of the primary rRNA binding proteins, this protein initially binds near the 5'-end of the 23S rRNA. It is important during the early stages of 50S assembly. It makes multiple contacts with different domains of the 23S rRNA in the assembled 50S subunit and ribosome. Forms part of the polypeptide exit tunnel. The chain is Large ribosomal subunit protein uL4 from Solibacter usitatus (strain Ellin6076).